A 97-amino-acid chain; its full sequence is Citrate lyase acyl carrier protein (97 aa).

Residue S14 is modified to O-(phosphoribosyl dephospho-coenzyme A)serine.

The protein belongs to the CitD family. As to quaternary structure, oligomer with a subunit composition of (alpha,beta,gamma)6.

It is found in the cytoplasm. Covalent carrier of the coenzyme of citrate lyase. This is Citrate lyase acyl carrier protein from Cronobacter sakazakii (strain ATCC BAA-894) (Enterobacter sakazakii).